The chain runs to 280 residues: Elongation factor Ts (280 aa).

The segment at 79–82 (TDFV) is involved in Mg(2+) ion dislocation from EF-Tu.

The protein belongs to the EF-Ts family.

The protein resides in the cytoplasm. Functionally, associates with the EF-Tu.GDP complex and induces the exchange of GDP to GTP. It remains bound to the aminoacyl-tRNA.EF-Tu.GTP complex up to the GTP hydrolysis stage on the ribosome. This chain is Elongation factor Ts, found in Treponema denticola (strain ATCC 35405 / DSM 14222 / CIP 103919 / JCM 8153 / KCTC 15104).